The following is a 307-amino-acid chain: tRNA N(3)-methylcytidine methyltransferase trm140 (307 aa).

Positions 83, 87, 125, 150, 176, 177, and 197 each coordinate S-adenosyl-L-methionine.

This sequence belongs to the methyltransferase superfamily. METL family.

The enzyme catalyses cytidine(32) in tRNA(Thr) + S-adenosyl-L-methionine = N(3)-methylcytidine(32) in tRNA(Thr) + S-adenosyl-L-homocysteine + H(+). In terms of biological role, S-adenosyl-L-methionine-dependent methyltransferase that mediates N(3)-methylcytidine modification of residue 32 of the tRNA anticodon loop of tRNA(Thr). Does not catalyze N(3)-methylcytidine modification of tRNA(Ser). This Schizosaccharomyces pombe (strain 972 / ATCC 24843) (Fission yeast) protein is tRNA N(3)-methylcytidine methyltransferase trm140.